We begin with the raw amino-acid sequence, 328 residues long: MKAPVRVAVTGAAGQIGYALLFRIASGEMLGKDQPVILQLLELSNEKAQAALKGVMMELEDCAFPLLAGMVGTDDAEVAFKDIDVALLVGARPRGPGMERKDLLLENAKIFTAQGAALNKVAKRDVKVLVVGNPANTNAYIAMKSAPDLNPKNFTAMLRLDHNRALSQLALKLGKPVGGIEKLVVWGNHSPTMYPDYRFATSDGASIGDAINDQEWNASTFIPTVGKRGAAIIEARGLSSAASAANAAIDHVRDWVLGSNGKWVTMGVPSDGSYGISEGVIFGFPVTTENGQYSLVKDLPIDDFSQKYIDKTLAELEEERSGVSHLLG.

11–17 (GAAGQIG) lines the NAD(+) pocket. 2 residues coordinate substrate: R94 and R100. NAD(+)-binding positions include N107, Q114, and 131 to 133 (VGN). Substrate is bound by residues N133 and R164. H189 serves as the catalytic Proton acceptor.

This sequence belongs to the LDH/MDH superfamily. MDH type 2 family.

It catalyses the reaction (S)-malate + NAD(+) = oxaloacetate + NADH + H(+). In terms of biological role, catalyzes the reversible oxidation of malate to oxaloacetate. In Xanthomonas oryzae pv. oryzae (strain MAFF 311018), this protein is Malate dehydrogenase.